A 59-amino-acid polypeptide reads, in one-letter code: Potassium channel toxin alpha-KTx 16.7 (59 aa).

An N-terminal signal peptide occupies residues 1–22 (MKILSILLIALVICSISICTEA). 3 disulfide bridges follow: Cys30–Cys51, Cys36–Cys56, and Cys40–Cys58.

This sequence belongs to the short scorpion toxin superfamily. Potassium channel inhibitor family. Alpha-KTx 16 subfamily. In terms of tissue distribution, expressed by the venom gland.

The protein resides in the secreted. Its function is as follows. May play a role in blocking voltage-gated potassium channels Kv1.2/KCNA2, and Kv1.3/KCNA3. Blocks the voltage-gated potassium channel Kv1.3/KCNA3, with an IC(50) of 118.3 +-55.8 nM. The polypeptide is Potassium channel toxin alpha-KTx 16.7 (Mesobuthus gibbosus (Mediterranean checkered scorpion)).